The following is a 1106-amino-acid chain: MGFNEFLSSIFGNKSTRDMKEIKPWVEKIKAAYPEIEALDNDALRAKTEELKKYIRESATDERAKVEELKASIESTELEDREEVFAQIDKIEKEILEKYEKALEEVLPVAFSIVKATAKRFTENEEIVVTATEFDRHLAATKDFVRIEGDKAIYQNHWNAGGNDTVWNMIHYDVQLFGGVVLHKGKIAEMATGEGKTLVATLPVFLNALTGNGVHVVTVNDYLAKRDSEWMGPLYMFHGLSVDCIDRHQPNSDARRQAYLADITFGTNNEFGFDYLRDNMAISPKDLVQRQHNYAIVDEVDSVLIDDARTPLIISGPVPKGDDQLFEQLRPLVERLVEAQKALATKYLSEAKRLIASNDKKEVEEGFLALYRSHKCLPKNKALIKFLSEQGIKAGMLKTEEIYMEQNNKRMHEVTEPLYFVIEEKLNSVDLTDKGIDLITGNSEDPTLFVLPDIAAQLSELENQNLTNEQLLEKKDELLTNYAIKSERVHTINQLLKAYTMFEKDDEYVVIDGQVKIVDEQTGRIMEGRRYSDGLHQAIEAKERVKVEAATQTFATITLQNYFRMYHKLSGMTGTAETEAGELWDIYKLDVVVIPTNRPIARKDMNDRVYKTKREKYKAVIEEIEKLVQAGRPVLVGTTSVEISEMLSKMLTMRKIEHSVLNAKLHQKEAEIVAKAGFSCAVTIATNMAGRGTDIKLSPEVKAAGGLAIIGTERHESRRVDRQLRGRAGRQGDPGSSVFFVSLEDDLMRLFSSDRIASVMDKLGFQEGEMIEHKMISNSIERAQKKVEENNFGIRKRLLEYDDVMNKQRTVVYTKRRHALMGERIGMDIVNMIWDRCANAIENNDYEGCQMELLQTLAMETPFTEEEFRNEKKDTLAEKTFNIAMENFKRKTERLAQIANPVIKQVYENQGHMYENILIPITDGKRMYNISCNLKAAYESESKEVVKAFEKSILLHVIDEAWKENLRELDELKHSVQNASYEQKDPLLIYKLESVTLFDAMVNKINNQTISILMRGQIPVQEAPADEQQPRRVEVRQAAPEQRQDMSKYREQKQDLSDPNQQAAASQDTREQQKREPIRAEKTVGRNDPCPCGSGKKYKNCHGQNA.

ATP contacts are provided by residues Gln-175, 193–197, and Asp-694; that span reads GEGKT. The interval 1021-1106 is disordered; sequence QEAPADEQQP…KYKNCHGQNA (86 aa). Residues 1042–1056 are compositionally biased toward basic and acidic residues; it reads QRQDMSKYREQKQDL. Residues 1057–1067 show a composition bias toward polar residues; it reads SDPNQQAAASQ. A compositionally biased stretch (basic and acidic residues) spans 1068 to 1085; sequence DTREQQKREPIRAEKTVG. The Zn(2+) site is built by Cys-1090, Cys-1092, Cys-1101, and His-1102.

It belongs to the SecA family. Monomer and homodimer. Part of the essential Sec protein translocation apparatus which comprises SecA, SecYEG and auxiliary proteins SecDF. Other proteins may also be involved. Requires Zn(2+) as cofactor.

The protein localises to the cell inner membrane. Its subcellular location is the cytoplasm. The catalysed reaction is ATP + H2O + cellular proteinSide 1 = ADP + phosphate + cellular proteinSide 2.. Its function is as follows. Part of the Sec protein translocase complex. Interacts with the SecYEG preprotein conducting channel. Has a central role in coupling the hydrolysis of ATP to the transfer of proteins into and across the cell membrane, serving as an ATP-driven molecular motor driving the stepwise translocation of polypeptide chains across the membrane. The sequence is that of Protein translocase subunit SecA from Bacteroides thetaiotaomicron (strain ATCC 29148 / DSM 2079 / JCM 5827 / CCUG 10774 / NCTC 10582 / VPI-5482 / E50).